We begin with the raw amino-acid sequence, 436 residues long: Gamma-glutamyl phosphate reductase (436 aa).

It belongs to the gamma-glutamyl phosphate reductase family.

Its subcellular location is the cytoplasm. It catalyses the reaction L-glutamate 5-semialdehyde + phosphate + NADP(+) = L-glutamyl 5-phosphate + NADPH + H(+). It participates in amino-acid biosynthesis; L-proline biosynthesis; L-glutamate 5-semialdehyde from L-glutamate: step 2/2. Its function is as follows. Catalyzes the NADPH-dependent reduction of L-glutamate 5-phosphate into L-glutamate 5-semialdehyde and phosphate. The product spontaneously undergoes cyclization to form 1-pyrroline-5-carboxylate. The polypeptide is Gamma-glutamyl phosphate reductase (Prochlorococcus marinus (strain MIT 9301)).